A 593-amino-acid chain; its full sequence is Aspartate--tRNA(Asp/Asn) ligase (593 aa).

Glu173 contributes to the L-aspartate binding site. Positions 197-200 (QLFK) are aspartate. An L-aspartate-binding site is contributed by Arg219. Residues 219–221 (RDE) and Gln228 each bind ATP. Residue His451 coordinates L-aspartate. Residue Glu485 coordinates ATP. Arg492 lines the L-aspartate pocket. 537 to 540 (GIDR) contributes to the ATP binding site.

Belongs to the class-II aminoacyl-tRNA synthetase family. Type 1 subfamily. Homodimer.

It is found in the cytoplasm. The enzyme catalyses tRNA(Asx) + L-aspartate + ATP = L-aspartyl-tRNA(Asx) + AMP + diphosphate. Its function is as follows. Aspartyl-tRNA synthetase with relaxed tRNA specificity since it is able to aspartylate not only its cognate tRNA(Asp) but also tRNA(Asn). Reaction proceeds in two steps: L-aspartate is first activated by ATP to form Asp-AMP and then transferred to the acceptor end of tRNA(Asp/Asn). This Legionella pneumophila subsp. pneumophila (strain Philadelphia 1 / ATCC 33152 / DSM 7513) protein is Aspartate--tRNA(Asp/Asn) ligase.